The primary structure comprises 309 residues: Homoserine O-succinyltransferase (309 aa).

Catalysis depends on Cys-142, which acts as the Acyl-thioester intermediate. Residues Lys-163 and Ser-192 each contribute to the substrate site. Catalysis depends on His-235, which acts as the Proton acceptor. Residue Glu-237 is part of the active site. Arg-249 contributes to the substrate binding site.

Belongs to the MetA family.

It localises to the cytoplasm. It catalyses the reaction L-homoserine + succinyl-CoA = O-succinyl-L-homoserine + CoA. Its pathway is amino-acid biosynthesis; L-methionine biosynthesis via de novo pathway; O-succinyl-L-homoserine from L-homoserine: step 1/1. Transfers a succinyl group from succinyl-CoA to L-homoserine, forming succinyl-L-homoserine. This Klebsiella pneumoniae (strain 342) protein is Homoserine O-succinyltransferase.